The primary structure comprises 598 residues: Fumarate reductase flavoprotein subunit (598 aa).

FAD-binding positions include 12 to 16 (GAGGA), 36 to 38 (ISK), 44 to 52 (SHTVAAEGG), 156 to 158 (HFV), and Asp212. At His45 the chain carries Tele-8alpha-FAD histidine. Catalysis depends on residues His233 and Arg249. FAD contacts are provided by residues 356–357 (HY), Glu380, and 391–397 (RLGSNSL). Positions 577–598 (AKRVYGGEADAQEKSDKEQANG) are disordered. Over residues 587–598 (AQEKSDKEQANG) the composition is skewed to basic and acidic residues.

This sequence belongs to the FAD-dependent oxidoreductase 2 family. FRD/SDH subfamily. Part of an enzyme complex containing four subunits: a flavoprotein (FrdA), an iron-sulfur protein (FrdB), and two hydrophobic anchor proteins (FrdC and FrdD). Interacts with SdhE. FAD serves as cofactor.

Its subcellular location is the cell inner membrane. It carries out the reaction a quinone + succinate = fumarate + a quinol. The catalysed reaction is a menaquinone + succinate = a menaquinol + fumarate. In terms of biological role, two distinct, membrane-bound, FAD-containing enzymes are responsible for the catalysis of fumarate and succinate interconversion; the fumarate reductase is used in anaerobic growth, and the succinate dehydrogenase is used in aerobic growth. In Serratia sp. (strain ATCC 39006) (Prodigiosinella confusarubida), this protein is Fumarate reductase flavoprotein subunit.